Consider the following 144-residue polypeptide: Ribosome maturation factor RimP (144 aa).

The protein belongs to the RimP family.

It localises to the cytoplasm. Functionally, required for maturation of 30S ribosomal subunits. The sequence is that of Ribosome maturation factor RimP from Azoarcus sp. (strain BH72).